A 680-amino-acid chain; its full sequence is Pilus tip adhesin Cpa (680 aa).

The segment at residues 62-211 is a cross-link (isoglutamyl cysteine thioester (Cys-Gln)); sequence CFNLTKHFPS…IFQSSDKTFQ (150 aa). The tract at residues 217 to 236 is disordered; the sequence is EYVPDTPPKPGEEPPAKTEK. A compositionally biased stretch (basic and acidic residues) spans 226 to 236; sequence PGEEPPAKTEK. The segment at residues 243–546 is a cross-link (isoaspartyl lysine isopeptide (Lys-Asp)); the sequence is KYAEGDYSKL…ELIDVISMED (304 aa). A CNA-B domain is found at 253–311; it reads LEGATLKLAQIEGSGFQEKIFDSNKSGEKVELPNGTYVLSELKPPQGYGVATPITFKVA. The isoglutamyl cysteine thioester (Cys-Gln) cross-link spans 374–526; that stretch reads CFNADLHSPP…FFVPNSSRYQ (153 aa). The isoaspartyl lysine isopeptide (Lys-Asn) cross-link spans 562–667; that stretch reads KTVTGTIADK…KEDETVAFEN (106 aa). Positions 672-676 match the VPPTG sorting signal motif; sequence VPPTG. Thr-675 is covalently cross-linked (Threonyl lysine isopeptide (Thr-Lys) (interchain with K-? in major pilin subunit)). Positions 676–680 are cleaved as a propeptide — removed by sortase; the sequence is GLTTD.

In terms of assembly, monomer. Post-translationally, proteolytically processed and assembled in pili through a transpeptidation reaction catalyzed by a sortase, which leads to a covalent link between Cpa and a major pilin subunit.

The protein resides in the fimbrium. Functionally, component of the pilus tip. Can bind covalently, via its two reactive thioester bonds, to molecular targets from host cell surface and can thus mediate adhesion of the streptococcal pili to host cells. Lysine side chains or a carbohydrate with a free amine group might be candidates for Cpa binding. In vitro, can covalently bind to spermidine, but it is unlikely that spermidine is the natural target of Cpa. In Streptococcus pyogenes, this protein is Pilus tip adhesin Cpa (cpa).